The following is a 63-amino-acid chain: Large ribosomal subunit protein bL28 (63 aa).

The tract at residues 1–21 is disordered; it reads MSRRDDLTGKGPMFGNNRSHA.

The protein belongs to the bacterial ribosomal protein bL28 family.

This Mycoplasmopsis pulmonis (strain UAB CTIP) (Mycoplasma pulmonis) protein is Large ribosomal subunit protein bL28.